The sequence spans 288 residues: Bifunctional protein FolD (288 aa).

NADP(+) is bound by residues 166-168 and Ile232; that span reads GAS.

The protein belongs to the tetrahydrofolate dehydrogenase/cyclohydrolase family. In terms of assembly, homodimer.

The catalysed reaction is (6R)-5,10-methylene-5,6,7,8-tetrahydrofolate + NADP(+) = (6R)-5,10-methenyltetrahydrofolate + NADPH. The enzyme catalyses (6R)-5,10-methenyltetrahydrofolate + H2O = (6R)-10-formyltetrahydrofolate + H(+). It functions in the pathway one-carbon metabolism; tetrahydrofolate interconversion. In terms of biological role, catalyzes the oxidation of 5,10-methylenetetrahydrofolate to 5,10-methenyltetrahydrofolate and then the hydrolysis of 5,10-methenyltetrahydrofolate to 10-formyltetrahydrofolate. This chain is Bifunctional protein FolD, found in Citrobacter koseri (strain ATCC BAA-895 / CDC 4225-83 / SGSC4696).